The sequence spans 339 residues: Dual specificity protein phosphatase 12 (339 aa).

At Met1 the chain carries N-acetylmethionine. Polar residues predominate over residues 1–22; it reads MLEVQSSNHGCERQAPTTSPAS. Positions 1 to 25 are disordered; sequence MLEVQSSNHGCERQAPTTSPASSAG. The 145-residue stretch at 26–170 folds into the Tyrosine-protein phosphatase domain; it reads HAVEVRPGLY…LKLYEAMGHE (145 aa). Residue Cys114 is the Phosphocysteine intermediate of the active site. 115–120 serves as a coordination point for substrate; that stretch reads HAGVSR. Phosphoserine is present on Ser334.

The protein belongs to the protein-tyrosine phosphatase family. Non-receptor class dual specificity subfamily. As to quaternary structure, monomer. It depends on Zn(2+) as a cofactor.

It is found in the nucleus. It localises to the cytoplasm. The protein localises to the cytosol. It catalyses the reaction O-phospho-L-tyrosyl-[protein] + H2O = L-tyrosyl-[protein] + phosphate. The catalysed reaction is O-phospho-L-seryl-[protein] + H2O = L-seryl-[protein] + phosphate. The enzyme catalyses O-phospho-L-threonyl-[protein] + H2O = L-threonyl-[protein] + phosphate. Dual specificity phosphatase; can dephosphorylate both phosphotyrosine and phosphoserine or phosphothreonine residues. Can dephosphorylate glucokinase (in vitro). Has phosphatase activity with the synthetic substrate 6,8-difluoro-4-methylumbelliferyl phosphate and other in vitro substrates. The protein is Dual specificity protein phosphatase 12 (Dusp12) of Rattus norvegicus (Rat).